A 233-amino-acid chain; its full sequence is MTIGIIGAMEEEVELLKNTMPHVEEVVIGGAKFYVGEIAGKEVVLLESGIGKVNAAIGTTLLADRFKPEIIINTGSAGGMAEGLAVGDVIISDRLAYGDVDVTEFGYTYGQVPRMPAFYQGDAVLLKKAETIYRDYFSQSENKAVYGLVITNDSFIMRPDQHELIRTFFPDVKAVEMEAAAIAQVAYQFDIPFLIIRAISDLANQEATISFDEFIHLAAKQSATCIIELLKTI.

Residue glutamate 12 is the Proton acceptor of the active site. Residues glycine 78, isoleucine 156, and methionine 177 to glutamate 178 contribute to the substrate site. Aspartate 201 (proton donor) is an active-site residue.

The protein belongs to the PNP/UDP phosphorylase family. MtnN subfamily.

It carries out the reaction S-adenosyl-L-homocysteine + H2O = S-(5-deoxy-D-ribos-5-yl)-L-homocysteine + adenine. The enzyme catalyses S-methyl-5'-thioadenosine + H2O = 5-(methylsulfanyl)-D-ribose + adenine. The catalysed reaction is 5'-deoxyadenosine + H2O = 5-deoxy-D-ribose + adenine. The protein operates within amino-acid biosynthesis; L-methionine biosynthesis via salvage pathway; S-methyl-5-thio-alpha-D-ribose 1-phosphate from S-methyl-5'-thioadenosine (hydrolase route): step 1/2. In terms of biological role, catalyzes the irreversible cleavage of the glycosidic bond in both 5'-methylthioadenosine (MTA) and S-adenosylhomocysteine (SAH/AdoHcy) to adenine and the corresponding thioribose, 5'-methylthioribose and S-ribosylhomocysteine, respectively. Also cleaves 5'-deoxyadenosine, a toxic by-product of radical S-adenosylmethionine (SAM) enzymes, into 5-deoxyribose and adenine. In Listeria welshimeri serovar 6b (strain ATCC 35897 / DSM 20650 / CCUG 15529 / CIP 8149 / NCTC 11857 / SLCC 5334 / V8), this protein is 5'-methylthioadenosine/S-adenosylhomocysteine nucleosidase.